A 314-amino-acid chain; its full sequence is Mitochondrial 2-oxoglutarate/malate carrier protein (314 aa).

A2 carries the N-acetylalanine modification. S6 carries the phosphoserine modification. Solcar repeat units follow at residues 23–108 (VKFL…LFER), 117–208 (PGFL…SKQF), and 217–306 (DNIL…MNKA). Residues 24–42 (KFLFGGLAGMGATVFVQPL) traverse the membrane as a helical segment. K57 carries the N6-succinyllysine modification. K73 bears the N6-acetyllysine mark. A helical transmembrane segment spans residues 83–101 (GLSAGLLRQATYTTTRLGI). The residue at position 102 (Y102) is a Phosphotyrosine. Transmembrane regions (helical) follow at residues 119 to 140 (FLLK…GTPA), 183 to 202 (GCIP…LASY), and 222 to 240 (HFCA…SMPV). K256 is modified (N6-acetyllysine). The helical transmembrane segment at 281-300 (GFTPYYARLGPHTVLTFIFL) threads the bilayer.

The protein belongs to the mitochondrial carrier (TC 2.A.29) family. As to quaternary structure, interacts with SMIM26. As to expression, most highly expressed in the heart.

The protein localises to the mitochondrion inner membrane. It carries out the reaction (S)-malate(in) + 2-oxoglutarate(out) = (S)-malate(out) + 2-oxoglutarate(in). It catalyses the reaction malonate(in) + 2-oxoglutarate(out) = malonate(out) + 2-oxoglutarate(in). The catalysed reaction is succinate(in) + 2-oxoglutarate(out) = succinate(out) + 2-oxoglutarate(in). The enzyme catalyses maleate(in) + 2-oxoglutarate(out) = maleate(out) + 2-oxoglutarate(in). It carries out the reaction oxaloacetate(in) + 2-oxoglutarate(out) = oxaloacetate(out) + 2-oxoglutarate(in). Catalyzes the transport of 2-oxoglutarate (alpha-oxoglutarate) across the inner mitochondrial membrane in an electroneutral exchange for malate. Can also exchange 2-oxoglutarate for other dicarboxylic acids such as malonate, succinate, maleate and oxaloacetate, although with lower affinity. Contributes to several metabolic processes, including the malate-aspartate shuttle, the oxoglutarate/isocitrate shuttle, in gluconeogenesis from lactate, and in nitrogen metabolism. Maintains mitochondrial fusion and fission events, and the organization and morphology of cristae. Involved in the regulation of apoptosis. Helps protect from cytotoxic-induced apoptosis by modulating glutathione levels in mitochondria. The sequence is that of Mitochondrial 2-oxoglutarate/malate carrier protein (SLC25A11) from Homo sapiens (Human).